Consider the following 115-residue polypeptide: Succinate dehydrogenase assembly factor 3, mitochondrial (115 aa).

This sequence belongs to the complex I LYR family. SDHAF3 subfamily. In terms of assembly, interacts with sdh2 within an sdh1-sdh2 subcomplex.

The protein resides in the mitochondrion matrix. Functionally, plays an essential role in the assembly of succinate dehydrogenase (SDH), an enzyme complex (also referred to as respiratory complex II) that is a component of both the tricarboxylic acid (TCA) cycle and the mitochondrial electron transport chain, and which couples the oxidation of succinate to fumarate with the reduction of ubiquinone (coenzyme Q) to ubiquinol. Promotes maturation of the iron-sulfur protein subunit sdh2 of the SDH catalytic dimer, protecting it from the deleterious effects of oxidants. May act together with SDHAF1. This Schizosaccharomyces pombe (strain 972 / ATCC 24843) (Fission yeast) protein is Succinate dehydrogenase assembly factor 3, mitochondrial.